A 147-amino-acid polypeptide reads, in one-letter code: MSSIPDYAEQLRTADLRVTRPRVAVLEAVNAHPHADTETIFGAVRFALPDVSRQAVYDVLHALTAAGLVRKIQPSGSVARYESRVGDNHHHIVCRSCGVIADVDCAVGEAPCLTASDHNGFLLDEAEVIYWGLCPDCSISDTSRSHP.

A DNA-binding region spans residues 1–85; sequence MSSIPDYAEQ…GSVARYESRV (85 aa). Zn(2+)-binding residues include H34 and E82. The dimerization stretch occupies residues 86-147; the sequence is GDNHHHIVCR…SISDTSRSHP (62 aa). D87 and H89 together coordinate Fe cation. Residues H91, C94, C97, and D102 each contribute to the Zn(2+) site. E109 is a Fe cation binding site.

Belongs to the Fur family. As to quaternary structure, homodimer.

It is found in the cytoplasm. Functionally, represses transcription of the catalase-peroxidase gene katG and its own transcription by binding to the promoter region in a redox-dependent manner. The protein is Transcriptional regulator FurA (furA) of Mycobacterium bovis (strain ATCC BAA-935 / AF2122/97).